Consider the following 237-residue polypeptide: Bax inhibitor 1 (237 aa).

The Cytoplasmic portion of the chain corresponds to 1–29; sequence MNIFDRKINFDALLKFSHITPSTQQHLKK. Lysine 7 participates in a covalent cross-link: Glycyl lysine isopeptide (Lys-Gly) (interchain with G-Cter in ubiquitin). The chain crosses the membrane as a helical span at residues 30 to 50; it reads VYASFALCMFVAAAGAYVHVV. Over 51–52 the chain is Lumenal; sequence TH. Residues 53–73 traverse the membrane as a helical segment; the sequence is FIQAGLLSALGSLALMIWLMA. The Cytoplasmic portion of the chain corresponds to 74 to 86; sequence TPHSHETEQKRLG. The helical transmembrane segment at 87–107 threads the bilayer; it reads LLAGFAFLTGVGLGPALELCI. The Lumenal segment spans residues 108 to 112; the sequence is AVNPS. The chain crosses the membrane as a helical span at residues 113 to 133; that stretch reads ILPTAFMGTAMIFTCFSLSAL. The Cytoplasmic portion of the chain corresponds to 134–139; that stretch reads YARRRS. Residues 140-160 traverse the membrane as a helical segment; sequence YLFLGGILMSAMSLMLLSSLG. At 161–166 the chain is on the lumenal side; the sequence is NLFFGS. The chain crosses the membrane as a helical span at residues 167–187; it reads IWLFQANLYLGLLVMCGFVLF. The Cytoplasmic segment spans residues 188 to 206; the sequence is DTQLIIEKAEHGDKDYIWH. Residues 207–227 constitute an intramembrane region (helical); the sequence is CVDLFLDFVTLFRKLMLILAF. The Cytoplasmic portion of the chain corresponds to 228-237; that stretch reads NEKDKKKEKK.

The protein belongs to the BI1 family. Interacts with BCL2. Interacts with BCL2L1. Interacts with ERN1. Post-translationally, ubiquitinated by BFAR, leading to proteasomal degradation. Highly abundant in adult testis.

It is found in the endoplasmic reticulum membrane. Endoplasmic reticulum (ER)-resident protein that confers cellular protection as an anti-apoptotic protein by limiting multiple stress-inducing pathways surrounding the endoplasmic reticulum and mitochondria. Inhibits the activities of the key sensor for the endoplasmic reticulum unfolded protein response IRE1alpha/ERN1 both directly and by blocking BAX/BAK binding. Modulates ER calcium homeostasis by acting as a calcium-leak channel. Negatively regulates autophagy and autophagosome formation, especially during periods of nutrient deprivation, and reduces cell survival during starvation. The polypeptide is Bax inhibitor 1 (Tmbim6) (Mus musculus (Mouse)).